The following is a 449-amino-acid chain: Probable cysteine proteinase 224L (449 aa).

Catalysis depends on residues cysteine 99, histidine 292, and asparagine 322. A helical transmembrane segment spans residues 429-449; sequence DTQIVFIFFLSVVILFIFIIL.

It belongs to the peptidase C1 family.

It is found in the membrane. Its function is as follows. Probable cysteine protease. The protein is Probable cysteine proteinase 224L of Acheta domesticus (House cricket).